Here is a 367-residue protein sequence, read N- to C-terminus: Cytochrome-c peroxidase IdrP2 (367 aa).

The first 28 residues, 1-28 (MTTHQSIRRLSRIAALVGLAFVAGTVAA), serve as a signal peptide directing secretion. 2 Cytochrome c domains span residues 47–157 (DMVE…AMWQ) and 200–345 (SQQK…EALS). Positions 69, 72, 73, 215, 218, and 219 each coordinate heme c.

The iodate reductase (Idr) complex is composed of a molybdopterin-dependent iodate reductase (IdrA and IdrB subunits) and two associated peroxidases (IdrP1 and IdrP2). The cofactor is heme c.

Its subcellular location is the periplasm. The catalysed reaction is 2 Fe(II)-[cytochrome c] + H2O2 + 2 H(+) = 2 Fe(III)-[cytochrome c] + 2 H2O. Functionally, involved in iodate respiration. May play a critical role in detoxification of inadvertent H(2)O(2) generated by the iodate reductase IdrA/IdrB. This is Cytochrome-c peroxidase IdrP2 from Denitromonas iodatirespirans.